Here is a 101-residue protein sequence, read N- to C-terminus: Phosphoribosyl-AMP cyclohydrolase (101 aa).

Position 71 (Asp-71) interacts with Mg(2+). Residue Cys-72 participates in Zn(2+) binding. Positions 73 and 75 each coordinate Mg(2+). Cys-88 and Cys-95 together coordinate Zn(2+).

The protein belongs to the PRA-CH family. In terms of assembly, homodimer. The cofactor is Mg(2+). Requires Zn(2+) as cofactor.

It is found in the cytoplasm. It carries out the reaction 1-(5-phospho-beta-D-ribosyl)-5'-AMP + H2O = 1-(5-phospho-beta-D-ribosyl)-5-[(5-phospho-beta-D-ribosylamino)methylideneamino]imidazole-4-carboxamide. It participates in amino-acid biosynthesis; L-histidine biosynthesis; L-histidine from 5-phospho-alpha-D-ribose 1-diphosphate: step 3/9. Catalyzes the hydrolysis of the adenine ring of phosphoribosyl-AMP. This chain is Phosphoribosyl-AMP cyclohydrolase, found in Bacillus cereus (strain B4264).